The primary structure comprises 40 residues: Dolichyl-diphosphooligosaccharide--protein glycosyltransferase subunit 4 (40 aa).

Topologically, residues 1 to 4 (MITD) are lumenal. A helical membrane pass occupies residues 5 to 25 (VQLAIFSNVLGVFLFLLVVAY). Residues 26-40 (HYINANTGKSSPKAK) lie on the Cytoplasmic side of the membrane.

This sequence belongs to the OST4 family. Component of the oligosaccharyltransferase (OST) complex.

The protein localises to the endoplasmic reticulum membrane. Its function is as follows. Subunit of the oligosaccharyl transferase (OST) complex that catalyzes the initial transfer of a defined glycan (Glc(3)Man(9)GlcNAc(2) in eukaryotes) from the lipid carrier dolichol-pyrophosphate to an asparagine residue within an Asn-X-Ser/Thr consensus motif in nascent polypeptide chains, the first step in protein N-glycosylation. N-glycosylation occurs cotranslationally and the complex associates with the Sec61 complex at the channel-forming translocon complex that mediates protein translocation across the endoplasmic reticulum (ER). All subunits are required for a maximal enzyme activity. This is Dolichyl-diphosphooligosaccharide--protein glycosyltransferase subunit 4 from Drosophila persimilis (Fruit fly).